We begin with the raw amino-acid sequence, 953 residues long: UvrABC system protein A (953 aa).

33-40 serves as a coordination point for ATP; sequence GLSGSGKS. ABC transporter domains lie at 320-599 and 619-949; these read WGST…EESI and GHDN…RYLK. ATP is bound at residue 652–659; the sequence is GVSGSGKS. The C4-type zinc-finger motif lies at 752–778; sequence CEACQGDGLIKIEMHFLPDVYVKCDIC.

The protein belongs to the ABC transporter superfamily. UvrA family. In terms of assembly, forms a heterotetramer with UvrB during the search for lesions.

The protein resides in the cytoplasm. Its function is as follows. The UvrABC repair system catalyzes the recognition and processing of DNA lesions. UvrA is an ATPase and a DNA-binding protein. A damage recognition complex composed of 2 UvrA and 2 UvrB subunits scans DNA for abnormalities. When the presence of a lesion has been verified by UvrB, the UvrA molecules dissociate. In Rickettsia typhi (strain ATCC VR-144 / Wilmington), this protein is UvrABC system protein A.